A 300-amino-acid polypeptide reads, in one-letter code: GTPase Era (300 aa).

The Era-type G domain maps to 8–176 (RCGYVAIVGR…ESLIASHLPE (169 aa)). Positions 16–23 (GRPNVGKS) are G1. Residue 16–23 (GRPNVGKS) coordinates GTP. The segment at 42-46 (QTTRH) is G2. The tract at residues 63-66 (DTPG) is G3. Residues 63–67 (DTPGM) and 125–128 (NKTD) contribute to the GTP site. Positions 125–128 (NKTD) are G4. The G5 stretch occupies residues 155–157 (ISA). One can recognise a KH type-2 domain in the interval 199 to 283 (VREKIMRQLG…MLNLWVKVKG (85 aa)).

Belongs to the TRAFAC class TrmE-Era-EngA-EngB-Septin-like GTPase superfamily. Era GTPase family. As to quaternary structure, monomer.

The protein localises to the cytoplasm. The protein resides in the cell inner membrane. Functionally, an essential GTPase that binds both GDP and GTP, with rapid nucleotide exchange. Plays a role in 16S rRNA processing and 30S ribosomal subunit biogenesis and possibly also in cell cycle regulation and energy metabolism. This chain is GTPase Era, found in Pseudomonas syringae pv. tomato (strain ATCC BAA-871 / DC3000).